The chain runs to 205 residues: Retron Vc95 putative HNH endonuclease (205 aa).

Its function is as follows. Putative HNH endonuclease component of antiviral defense system retron Vc95, composed of a non-coding RNA (ncRNA), a reverse transcriptase (RT), a probable ATP-binding protein and this protein. Expression of retron Vc95 confers protection against bacteriophages T2, T4 and T6. At multiplicity of infection (MOI) of 0.02 cultures slow growth when infected with T4 but do not collapse, at MOI 2 cultures enter growth stasis. The sequence is that of Retron Vc95 putative HNH endonuclease from Vibrio cholerae serotype O1 biovar El Tor.